Here is a 2279-residue protein sequence, read N- to C-terminus: MYRSSARSSVSSHRPKDDGGGGPRSGRSSGSSSGPARRSSPPPPPSGSSSRTPARRPRSPSGHRGRRASPSPPRGRRVSPSPPRARRGSPSPPRGRRLFPPGPAGFRGSSRGESRADYARDGRGDHPGDSGSRRRSPGLCSDSLEKSLRITVGNDHFCVSTPERRRLSDRLGSPVDNLEDMDRDDLTDDSVFTRSSQCSRGLERYISQEEGPLSPFLGQLDEDYRTKETFLHRSDYSPHISCHDELLRGTERNREKLKGYSIRSEERSREAKRPRYDDTVKINSMGGDHPSFTSGTRNYRQRRRSPSPRFLDPEFRELDLARRKREEEEERSRSLSQELVGVDGGGTGCSIPGLSGVLTASEPGYSLHRPEEVSVMPKKSILKKRIEVDIMEPSMQLESFSSSTSSSQDHPLYSGHPSLPLSGAIAAFASEIENKGTMVETALKEPQGNLYQWGPLPGIPKDNSPLREKFGSFLCHKDNLDLKAEGPERHTDFLLPHERASQDGSGFSRILSMLADSTSTQEKRRRSFPDIEDEEKFLYGDEEEDLKAESVPKPLGSSESEVMRQKASSLPSSAPAVKLESLEETNPEYAKIHDLLKTIGLDIGVAEISQLAARTQERLHGKKPSLRSSADRRSSVDRYFSADHCSSVDHRFSADRCSSVDHCFSADRRSSDPHRLESREAHHSNTHSPEVSHPHPPSPVDPYLLTKNSPPFLKSDHPVGHISGPEVVGSGFQSSVAVRCMLPSAPSAPIRLPHTAALSQFHMPRASQFAAARIPPNYQGPAIPPASFDAYRHYMAYAASRWPMYPTSQPSNHPVPEPHRIMPITKQATRSRPNLRVIPTVTPDKPKQKESLRGSIPAAQVPVQVSIPSLIRYNPEKISDEKNRASQKQKVIEEREKLKNDREARQKKMYYLRTELERLHKQQGEMLRKKRREKDGHKDPLLVEVSRLQDNIMKDIAELRQEAEEAEKKQSELDKVAQILGINIFDKSQKSLSDSREPTEKPGKAEKSKSPEKVSSFSNSSSNKESKVNNEKFRTKSPKPAESPQSATKQLDQPTAAYEYYDAGNHWCKDCNTICGTMFDFFTHMHNKKHTQTLDPYNRPWASKTQSEAKQDAIKRTDKITVPAKGSEFLVPISGFYCQLCEEFLGDPISGEQHVKGHQHNEKYKKYVDENPLYEERRNLDRQAGLAVVLETERRRQSELKRKLSEKPKEEKKEKKAKAVKEVKEDDKVSEKLEDQLSEGRNSPEKAENKRNTGIKLQLKEEVKKESPTSSSFGKFSWKKPEKEEEKSSLVTPSISKEEILESSKDKEDGKTEAGKAKPIKIKLSGKTVVAHTSPWMPVVTTSTQTKIRPNLPIPSTVLRKSCSATMSKPAPLNTFLSIKSSGTTAKPLPVVKESSADLLLPPDIISKAFGGEEVILKGSPEEKVVLAEKSEPSHLPEQILPPPPPPPPPPPPPPPVIPHPAAPSAAQANAILAPVKSNPVVSQTLSPGFVGPNILNPVLPVAIMASAQPAAIPSDETAPGVSESDRDQTLFSVLVRPPPPLSSVFSEQAKKLEKRNSCLATANAKDLYDIFYSSGGKGAPETKGAPETKLSGGPLANGENSNLSRTKSSDTSSTSPLNSSASQEELHQDEGLVAAPIVSNSEKPIAKTLVALGKWSVVEHVGPKSTGSTYGFLQPLTRLCQSRPYETITPKTDTLAIWTSSSFQSDTSRDISPEKSELDLGEPGPPGVEPPPQLLDIQCKESQKLVEIHLRESVNQDKESQELRKSEDCRESEIETNTELKERVKELSEGIVDEGVSTSIGPHSIDDSNLNHGNRYMWEGEVKQPNLLMIDKEAEQSNKLMTGSETPSKVVIKLSPQACSFTKAKLDSFLSEARSLLNPQDTPVKISAPELLLHSPARSAMCLTGSPQEQGVSVVSEEGLENSAPESASRTSRYRSLKLKRERSKDFQVKKIYELAVWDENKKRPETWESPEKPKTEALELQDVHPELTVTIESKALEDFEATDLKVEELTALGNLGDMPVDFCTTRVSPAHRSPTVLCQKVCEENSVSPIGCNSSDPADFEPIPSFSGFPLDSPKTLVLDFETEGERNSPNPRSVRIPSPNILKTGLTENVDRGLGGLEGTHQALDLLAGGMMPEEVKESSQLDKQESLGLELKTINSAGLGPSPCLPDLVDFVTRTSGVQKDKLCSPLSEPGDPSKCSSLELGPLQLEISNASTTEVAILQVDDDSGDPLNLVKAPVSRSPPREQVIEDNMVPQGMPEQETTVGAIQDHTESSVHN.

Low complexity-rich tracts occupy residues 1-12 (MYRSSARSSVSS) and 25-39 (SGRS…ARRS). Disordered stretches follow at residues 1–140 (MYRS…PGLC) and 164–189 (RRRL…LTDD). Residues 1 to 1092 (MYRSSARSSV…THMHNKKHTQ (1092 aa)) are interaction with AR. A Phosphoserine modification is found at Ser40. Basic residues predominate over residues 53–67 (PARRPRSPSGHRGRR). Ser79 and Ser81 each carry phosphoserine. Positions 110–132 (SRGESRADYARDGRGDHPGDSGS) are enriched in basic and acidic residues. Residues Ser136 and Ser173 each carry the phosphoserine modification. Positions 177–188 (NLEDMDRDDLTD) are enriched in acidic residues. Tyr205 is subject to Phosphotyrosine. Phosphoserine is present on residues Ser207 and Ser214. Disordered stretches follow at residues 279–346 (TVKI…DGGG) and 397–416 (LESF…YSGH). Positions 311-333 (LDPEFRELDLARRKREEEEERSR) are enriched in basic and acidic residues. Residues 315 to 343 (FRELDLARRKREEEEERSRSLSQELVGVD) are a coiled coil. Phosphoserine occurs at positions 464, 472, 501, and 527. Disordered regions lie at residues 514-533 (LADS…DIED) and 540-570 (GDEE…ASSL). Residues Lys547, Lys553, Lys566, and Lys578 each participate in a glycyl lysine isopeptide (Lys-Gly) (interchain with G-Cter in SUMO2) cross-link. Basic and acidic residues predominate over residues 664-683 (FSADRRSSDPHRLESREAHH). The interval 664 to 709 (FSADRRSSDPHRLESREAHHSNTHSPEVSHPHPPSPVDPYLLTKNS) is disordered. Phosphothreonine is present on Thr842. Residues 876–980 (EKISDEKNRA…SELDKVAQIL (105 aa)) are a coiled coil. 2 stretches are compositionally biased toward basic and acidic residues: residues 922 to 941 (QQGE…KDPL) and 989 to 1012 (QKSL…KSPE). Disordered stretches follow at residues 922–942 (QQGE…DPLL) and 989–1051 (QKSL…TKQL). Phosphoserine is present on Ser1010. A compositionally biased stretch (low complexity) spans 1013 to 1023 (KVSSFSNSSSN). Positions 1024–1034 (KESKVNNEKFR) are enriched in basic and acidic residues. Ser1037 is modified (phosphoserine). Matrin-type zinc fingers lie at residues 1063-1097 (AGNH…LDPY) and 1136-1166 (FYCQ…KYKK). Basic and acidic residues-rich tracts occupy residues 1195–1235 (RRQS…KLED), 1242–1251 (NSPEKAENKR), 1258–1267 (QLKEEVKKES), 1279–1288 (KKPEKEEEKS), and 1296–1316 (SKEE…EAGK). The interval 1195–1319 (RRQSELKRKL…GKTEAGKAKP (125 aa)) is disordered. Phosphoserine occurs at positions 1243 and 1267. Position 1420 is a phosphoserine (Ser1420). Disordered stretches follow at residues 1428 to 1463 (AEKS…HPAA), 1577 to 1628 (GKGA…EELH), 1702 to 1735 (SSFQ…PPQL), and 1753 to 1775 (ESVN…ESEI). The segment covering 1440–1462 (ILPPPPPPPPPPPPPPPVIPHPA) has biased composition (pro residues). Residues 1602–1623 (SNLSRTKSSDTSSTSPLNSSAS) are compositionally biased toward low complexity. Residues 1708 to 1719 (TSRDISPEKSEL) are compositionally biased toward basic and acidic residues. Ser1713 carries the phosphoserine modification. Positions 1724-1734 (PGPPGVEPPPQ) are enriched in pro residues. Residues 1768–1792 (EDCRESEIETNTELKERVKELSEGI) are a coiled coil. A phosphoserine mark is found at Ser1856, Ser1896, Ser1971, Ser2030, Ser2035, Ser2091, Ser2101, Ser2189, Ser2192, and Ser2243. Residues 2252–2279 (DNMVPQGMPEQETTVGAIQDHTESSVHN) form a disordered region.

As to quaternary structure, homodimer. Heterodimer of isoform 1 and isoform 2. Isoform 1 and isoform 2 interact with AR. Expressed in endocrine tissue.

Its subcellular location is the nucleus. In terms of biological role, acts as a transcriptional corepressor for AR-mediated transactivation function. May act as a transcriptional regulator during spermatogenesis and, in particular, during meiotic division. Acts as a transcriptional coactivator for AR-mediated transactivation function. May act as a transcriptional regulator during spermatogenesis and, in particular, during meiotic division. The protein is Zinc finger protein 318 (ZNF318) of Homo sapiens (Human).